The following is a 206-amino-acid chain: CBS domain-containing protein CBSX3, mitochondrial (206 aa).

The N-terminal 39 residues, 1–39 (MQGVIRSFVSGGNVVKGSVLQHLRVINPAIQPSVFCSRS), are a transit peptide targeting the mitochondrion. 2 CBS domains span residues 61 to 127 (MKSK…GRSS) and 136 to 194 (MTEE…HREE).

The protein resides in the mitochondrion. This is CBS domain-containing protein CBSX3, mitochondrial (CBSX3) from Arabidopsis thaliana (Mouse-ear cress).